The sequence spans 204 residues: Holliday junction branch migration complex subunit RuvA (204 aa).

The domain I stretch occupies residues 1–64 (MIGKLKGTIE…EDQIRLFGFM (64 aa)). A domain II region spans residues 65-143 (AVLEREWFNL…AFAGEATNIG (79 aa)). Residues 144 to 151 (FKQELGEG) form a flexible linker region. Residues 152–204 (VAPAPVSDAVSALTNLGYSRDQAANAIAAAMKVAGDEADSAKLIRLGLKELSR) are domain III.

Belongs to the RuvA family. In terms of assembly, homotetramer. Forms an RuvA(8)-RuvB(12)-Holliday junction (HJ) complex. HJ DNA is sandwiched between 2 RuvA tetramers; dsDNA enters through RuvA and exits via RuvB. An RuvB hexamer assembles on each DNA strand where it exits the tetramer. Each RuvB hexamer is contacted by two RuvA subunits (via domain III) on 2 adjacent RuvB subunits; this complex drives branch migration. In the full resolvosome a probable DNA-RuvA(4)-RuvB(12)-RuvC(2) complex forms which resolves the HJ.

The protein resides in the cytoplasm. In terms of biological role, the RuvA-RuvB-RuvC complex processes Holliday junction (HJ) DNA during genetic recombination and DNA repair, while the RuvA-RuvB complex plays an important role in the rescue of blocked DNA replication forks via replication fork reversal (RFR). RuvA specifically binds to HJ cruciform DNA, conferring on it an open structure. The RuvB hexamer acts as an ATP-dependent pump, pulling dsDNA into and through the RuvAB complex. HJ branch migration allows RuvC to scan DNA until it finds its consensus sequence, where it cleaves and resolves the cruciform DNA. This chain is Holliday junction branch migration complex subunit RuvA, found in Rhizobium rhizogenes (strain K84 / ATCC BAA-868) (Agrobacterium radiobacter).